A 272-amino-acid polypeptide reads, in one-letter code: Putative pyruvate, phosphate dikinase regulatory protein 2 (272 aa).

Residue 154 to 161 coordinates ADP; sequence GVSRTSKT.

The protein belongs to the pyruvate, phosphate/water dikinase regulatory protein family. PDRP subfamily.

It catalyses the reaction N(tele)-phospho-L-histidyl/L-threonyl-[pyruvate, phosphate dikinase] + ADP = N(tele)-phospho-L-histidyl/O-phospho-L-threonyl-[pyruvate, phosphate dikinase] + AMP + H(+). The catalysed reaction is N(tele)-phospho-L-histidyl/O-phospho-L-threonyl-[pyruvate, phosphate dikinase] + phosphate + H(+) = N(tele)-phospho-L-histidyl/L-threonyl-[pyruvate, phosphate dikinase] + diphosphate. In terms of biological role, bifunctional serine/threonine kinase and phosphorylase involved in the regulation of the pyruvate, phosphate dikinase (PPDK) by catalyzing its phosphorylation/dephosphorylation. In Staphylococcus epidermidis (strain ATCC 35984 / DSM 28319 / BCRC 17069 / CCUG 31568 / BM 3577 / RP62A), this protein is Putative pyruvate, phosphate dikinase regulatory protein 2.